We begin with the raw amino-acid sequence, 243 residues long: Type III pantothenate kinase (243 aa).

Residue 6-13 (DIGNTNLK) participates in ATP binding. Residue 101–104 (GSDI) participates in substrate binding. Catalysis depends on aspartate 103, which acts as the Proton acceptor. Threonine 125 provides a ligand contact to ATP. Threonine 176 contacts substrate.

It belongs to the type III pantothenate kinase family. As to quaternary structure, homodimer. NH4(+) is required as a cofactor. Requires K(+) as cofactor.

The protein localises to the cytoplasm. It carries out the reaction (R)-pantothenate + ATP = (R)-4'-phosphopantothenate + ADP + H(+). The protein operates within cofactor biosynthesis; coenzyme A biosynthesis; CoA from (R)-pantothenate: step 1/5. In terms of biological role, catalyzes the phosphorylation of pantothenate (Pan), the first step in CoA biosynthesis. The protein is Type III pantothenate kinase of Mycoplasma mobile (strain ATCC 43663 / 163K / NCTC 11711) (Mesomycoplasma mobile).